We begin with the raw amino-acid sequence, 764 residues long: FHF complex subunit HOOK interacting protein 2A (764 aa).

Residues 190–236 (SEDGPKGQDPGSGDVSQCQQPQELSGATGVEPTESEEEPPHQMDDLS) form a disordered region. The span at 203–214 (DVSQCQQPQELS) shows a compositional bias: polar residues.

The protein belongs to the FHIP family.

In terms of biological role, may be required for proper functioning of the nervous system. The chain is FHF complex subunit HOOK interacting protein 2A from Mus musculus (Mouse).